Consider the following 62-residue polypeptide: Large ribosomal subunit protein uL30 (62 aa).

Belongs to the universal ribosomal protein uL30 family. Part of the 50S ribosomal subunit.

The sequence is that of Large ribosomal subunit protein uL30 from Paracoccus denitrificans (strain Pd 1222).